A 331-amino-acid chain; its full sequence is Glycerophosphodiester phosphodiesterase 1 (331 aa).

At 1 to 3 (MWL) the chain is on the cytoplasmic side. A helical membrane pass occupies residues 4–24 (WEDQGGLLGPFSFVLVLLLVV). Residues 25-248 (TRSPFNACVL…PRYSVFWKQS (224 aa)) lie on the Lumenal side of the membrane. Residues 65–331 (VSAIAHRGGS…SMLEDCAPHF (267 aa)) enclose the GP-PDE domain. Residues Glu97 and Asp99 each contribute to the Mg(2+) site. An N-linked (GlcNAc...) asparagine glycan is attached at Asn168. Position 174 (Asp174) interacts with Mg(2+). A helical membrane pass occupies residues 249–269 (VFVVLDILLDWSMHNVLWYLC). At 270–331 (GISAFLMQKD…SMLEDCAPHF (62 aa)) the chain is on the cytoplasmic side.

This sequence belongs to the glycerophosphoryl diester phosphodiesterase family. As to quaternary structure, interacts with PRAF2. Interacts with RGS16. Mg(2+) serves as cofactor. Post-translationally, N-glycosylated. In terms of tissue distribution, widely expressed. Highly expressed in the brain and spinal cord, followed by kidney, liver, and testis. In contrast, little or no expression is detected in the heart or spleen.

It localises to the cell membrane. It is found in the cytoplasmic vesicle membrane. The catalysed reaction is sn-glycero-3-phospho-1D-myo-inositol + H2O = myo-inositol + sn-glycerol 3-phosphate + H(+). It catalyses the reaction 1-O-(1Z-octadecenyl)-sn-glycero-3-phospho-(N-5Z,8Z,11Z,14Z-eicosatetraenoyl)-ethanolamine + H2O = 1-O-(1Z-octadecenyl)-sn-glycero-3-phosphate + N-(5Z,8Z,11Z,14Z-eicosatetraenoyl)-ethanolamine + H(+). It carries out the reaction 1-O-(1Z-octadecenyl)-sn-glycero-3-phospho-(N-9Z-octadecenoyl)-ethanolamine + H2O = 1-O-(1Z-octadecenyl)-sn-glycero-3-phosphate + N-(9Z-octadecenoyl) ethanolamine + H(+). The enzyme catalyses 1-O-(1Z-octadecenyl)-sn-glycero-3-phospho-N-hexadecanoyl-ethanolamine + H2O = 1-O-(1Z-octadecenyl)-sn-glycero-3-phosphate + N-hexadecanoylethanolamine + H(+). The catalysed reaction is N-(4Z,7Z,10Z,13Z,16Z,19Z)-docosahexaenoyl-sn-glycero-3-phosphoethanolamine + H2O = N-(4Z,7Z,10Z,13Z,16Z,19Z)-docosahexaenoyl ethanolamine + sn-glycerol 3-phosphate + H(+). It catalyses the reaction N-eicosanoyl-sn-glycero-3-phosphoethanolamine + H2O = N-eicosanoyl ethanolamine + sn-glycerol 3-phosphate + H(+). It carries out the reaction N-hexadecanoyl-sn-glycero-3-phosphoethanolamine + H2O = N-hexadecanoylethanolamine + sn-glycerol 3-phosphate + H(+). The enzyme catalyses N-(9Z-octadecenoyl)-sn-glycero-3-phosphoethanolamine + H2O = N-(9Z-octadecenoyl) ethanolamine + sn-glycerol 3-phosphate + H(+). The catalysed reaction is N-(5Z,8Z,11Z,14Z-eicosatetraenoyl)-sn-glycero-3-phosphoethanolamine + H2O = N-(5Z,8Z,11Z,14Z-eicosatetraenoyl)-ethanolamine + sn-glycerol 3-phosphate + H(+). Its activity is regulated as follows. Inhibited by EDTA, calcium chloride, and zinc chloride. Enhanced by magnesium chloride. Glycerophosphodiester phosphodiesterase activity can be modulated by G-protein signaling pathways. In terms of biological role, hydrolyzes the phosphodiester bond of glycerophosphodiesters such as glycerophosphoinositol (GroPIns) and glycerophosphoethanolamine (GroPEth), to yield a glycerol phosphate and an alcohol. Hydrolyzes glycerophospho-N-acylethanolamines to N-acylethanolamines in the brain and participates in bioactive N-acylethanolamine biosynthesis such as anandamide (an endocannabinoid), N-palmitoylethanolamine (an anti-inflammatory), and N-oleoylethanolamine (an anorexic). In addition, has a lysophospholipase D activity by hydrolyzing N-acyl-lysoplasmenylethanolamine (N-acyl-lysoPlsEt) to N-acylethanolamine. However lysophospholipase D activity is lower than glycerophosphodiester phosphodiesterase activity. Has little or no activity towards glycerophosphocholine. This chain is Glycerophosphodiester phosphodiesterase 1, found in Mus musculus (Mouse).